The sequence spans 307 residues: Metapyrocatechase (307 aa).

2 consecutive VOC domains span residues 7 to 122 and 150 to 269; these read RPGH…LYAD and RFDH…VFCG. Fe cation-binding residues include H153, H214, and E265.

It belongs to the extradiol ring-cleavage dioxygenase family. As to quaternary structure, homotetramer. Fe(2+) is required as a cofactor.

It carries out the reaction catechol + O2 = (2Z,4E)-2-hydroxy-6-oxohexa-2,4-dienoate + H(+). It participates in xenobiotic degradation; toluene degradation. This Pseudomonas putida (Arthrobacter siderocapsulatus) protein is Metapyrocatechase (xylE).